The following is a 254-amino-acid chain: DNA repair protein RecO (254 aa).

Belongs to the RecO family.

Involved in DNA repair and RecF pathway recombination. This chain is DNA repair protein RecO, found in Anaeromyxobacter sp. (strain K).